Here is a 407-residue protein sequence, read N- to C-terminus: Peptidase T (407 aa).

Residue His78 participates in Zn(2+) binding. The active site involves Asp80. Residue Asp141 coordinates Zn(2+). Catalysis depends on Glu175, which acts as the Proton acceptor. Positions 176, 198, and 380 each coordinate Zn(2+).

This sequence belongs to the peptidase M20B family. Requires Zn(2+) as cofactor.

It localises to the cytoplasm. The catalysed reaction is Release of the N-terminal residue from a tripeptide.. Its function is as follows. Cleaves the N-terminal amino acid of tripeptides. This Clostridium novyi (strain NT) protein is Peptidase T.